Consider the following 710-residue polypeptide: MRYIVSPQLVLQVGKGQEVERALYLTPYDYIDEKSPIYYFLRSHLNIQQPEIVKRHILLTLRMTQLKGYLGNLLDIKDDIIIYSHKNNLEYSYVDNTIFNPFVYTQKKTLLKNDSFLYNVYPGACDFLVIWVARACDTSIPEFGSYEDVDNNIIKFETMLMDVFPQLDLDITVESKFNNIFRTNLKLTGLKKIIQRVQDLDINYKSLLSRYDEHFINMTGNHFILNDEQLNLSIWDLDGTLALSSDGDTVMINNVKLFTDLVSDIDTQMERIKGDITYKVHLATPINSRIKLDIETSFIFIETATNNILLSSDKKISIILAKNHISIKVKNHIPNIEKYFTFLVIAINAMFNSVQKSADFTKVETVYWSRICQNTKNKNRKPVIINYLDPGMKKISNNFYRSDEKEVFINDNDIMFTCMDPLGKYNKVGFLNIFHDMRKYCIPCCFLHDQSHRSTFSSCVHQIDVEKKIVSPYILNFGKVVTESKMSFLPIIFDAFLNDGMTANMEQDNKRLKETSGYHIVRCCTGNDIVRLRTTSNIIQFVNEDKNILIVNDMVYFPMNASDIGKKIHILIQEIVHEVMIVKKKESSDKIDFFPPNYKLLKDLFPKQTIQTPIQSDAGMVLTTDGFYIDGKLFNEDLSSKYVTFTKNVITSDAVAKYFSPLFKYVISEAKDRFIKTWMINIMIHMNVDPNNIIPTLEKYYPNFGRVQIN.

This sequence belongs to the poxviridae VETF large subunit family. As to quaternary structure, heterodimer of a 70 kDa and a 82 kDa subunit. Part of the early transcription complex composed of ETF, RAP94/OPG109, and the DNA-directed RNA polymerase.

The protein localises to the virion. In terms of biological role, acts with RNA polymerase to initiate transcription from early gene promoters. Is recruited by the RPO-associated protein of 94 kDa RAP94/OPG109 to form the early transcription complex, which also contains the core RNA polymerase. ETF heterodimer binds to early gene promoters. This chain is Early transcription factor 82 kDa subunit (OPG133), found in Variola virus (isolate Human/India/Ind3/1967) (VARV).